Here is a 185-residue protein sequence, read N- to C-terminus: MRSKRTRVNNQIRVPEVRLIDEKGEQVGVVRTDRALTMAEEAGLDLVEISPTAKPPVCRIMNFGKYQFEQSKRKAAQKKKQRLVHLKEVKFRPGTDVGDYQVKLRKIATFLDRGDKVKVSLRFRGREMQHRELGLELLGRVKRDLGNIVVEQEPRLEGRQMTMVVMKAKGEGNKTKREDHAEIKD.

This sequence belongs to the IF-3 family. In terms of assembly, monomer.

The protein resides in the cytoplasm. IF-3 binds to the 30S ribosomal subunit and shifts the equilibrium between 70S ribosomes and their 50S and 30S subunits in favor of the free subunits, thus enhancing the availability of 30S subunits on which protein synthesis initiation begins. In Coxiella burnetii (strain RSA 493 / Nine Mile phase I), this protein is Translation initiation factor IF-3.